We begin with the raw amino-acid sequence, 304 residues long: Large ribosomal subunit protein uL18 (304 aa).

Belongs to the universal ribosomal protein uL18 family. As to quaternary structure, component of a hexameric 5S RNP precursor complex, composed of 5S RNA, RRS1, RPF2, RPL5, RPL11 and SYO1; this complex acts as a precursor for ribosome assembly.

Its subcellular location is the cytoplasm. Its function is as follows. Component of the ribosome, a large ribonucleoprotein complex responsible for the synthesis of proteins in the cell. The small ribosomal subunit (SSU) binds messenger RNAs (mRNAs) and translates the encoded message by selecting cognate aminoacyl-transfer RNA (tRNA) molecules. The large subunit (LSU) contains the ribosomal catalytic site termed the peptidyl transferase center (PTC), which catalyzes the formation of peptide bonds, thereby polymerizing the amino acids delivered by tRNAs into a polypeptide chain. The nascent polypeptides leave the ribosome through a tunnel in the LSU and interact with protein factors that function in enzymatic processing, targeting, and the membrane insertion of nascent chains at the exit of the ribosomal tunnel. This is Large ribosomal subunit protein uL18 from Chaetomium thermophilum (strain DSM 1495 / CBS 144.50 / IMI 039719) (Thermochaetoides thermophila).